Here is a 1111-residue protein sequence, read N- to C-terminus: Probable arabinosyltransferase A (1111 aa).

Transmembrane regions (helical) follow at residues 12–34 (IIRL…VPLL), 205–224 (IAVG…LSAL), 333–355 (VWMR…HWVL), 370–387 (VAVL…LPFN), 394–413 (PLIA…AIAL), 423–445 (AVVA…ALLT), 462–484 (GLLA…VFHS), 530–547 (FPVL…VVLL), 554–576 (GLAS…LLTF), 581–603 (WAIQ…AFAF), 615–637 (TVYI…GWFG), 652–674 (IAGH…LAGG), and 695–717 (FLAT…GSLA). The interval 804 to 831 (GLVNSDASPNKPNVTFSDSAGTAGGKGP) is disordered. A compositionally biased stretch (polar residues) spans 808–823 (SDASPNKPNVTFSDSA).

The protein belongs to the emb family.

It localises to the cell membrane. Arabinosyl transferase responsible for the polymerization of arabinose into the arabinan of arabinogalactan. The polypeptide is Probable arabinosyltransferase A (embA) (Mycobacterium leprae (strain TN)).